Here is a 438-residue protein sequence, read N- to C-terminus: Putative galacturan 1,4-alpha-galacturonidase A (438 aa).

The signal sequence occupies residues 1–21; the sequence is MRMPSAISIGVFAGLSLAASA. N28, N102, N111, and N197 each carry an N-linked (GlcNAc...) asparagine glycan. PbH1 repeat units lie at residues 186–222 and 223–244; these read SSHI…DTYR and SDHI…AFKG. D237 acts as the Proton donor in catalysis. N-linked (GlcNAc...) asparagine glycosylation is found at N245, N253, N279, N325, N353, N372, and N388. 3 PbH1 repeats span residues 246–266, 277–303, and 323–344; these read STNI…AFGS, VENV…YFKS, and VRNV…YIDT. C397 and C403 are joined by a disulfide. N-linked (GlcNAc...) asparagine glycosylation is present at N418.

Belongs to the glycosyl hydrolase 28 family.

The protein resides in the secreted. The enzyme catalyses [(1-&gt;4)-alpha-D-galacturonosyl](n) + H2O = alpha-D-galacturonate + [(1-&gt;4)-alpha-D-galacturonosyl](n-1). Functionally, specific in hydrolyzing the terminal glycosidic bond of polygalacturonic acid and oligogalacturonates. This Aspergillus niger protein is Putative galacturan 1,4-alpha-galacturonidase A (rgxA).